Consider the following 142-residue polypeptide: Large ribosomal subunit protein uL11 (142 aa).

It belongs to the universal ribosomal protein uL11 family. As to quaternary structure, part of the ribosomal stalk of the 50S ribosomal subunit. Interacts with L10 and the large rRNA to form the base of the stalk. L10 forms an elongated spine to which L12 dimers bind in a sequential fashion forming a multimeric L10(L12)X complex. Post-translationally, one or more lysine residues are methylated.

Functionally, forms part of the ribosomal stalk which helps the ribosome interact with GTP-bound translation factors. The chain is Large ribosomal subunit protein uL11 from Mycobacterium ulcerans (strain Agy99).